Consider the following 465-residue polypeptide: ATP-dependent protease ATPase subunit HslU (465 aa).

ATP contacts are provided by residues valine 18, 60-65 (GVGKTE), aspartate 277, glutamate 342, and arginine 414.

Belongs to the ClpX chaperone family. HslU subfamily. In terms of assembly, a double ring-shaped homohexamer of HslV is capped on each side by a ring-shaped HslU homohexamer. The assembly of the HslU/HslV complex is dependent on binding of ATP.

It localises to the cytoplasm. ATPase subunit of a proteasome-like degradation complex; this subunit has chaperone activity. The binding of ATP and its subsequent hydrolysis by HslU are essential for unfolding of protein substrates subsequently hydrolyzed by HslV. HslU recognizes the N-terminal part of its protein substrates and unfolds these before they are guided to HslV for hydrolysis. The sequence is that of ATP-dependent protease ATPase subunit HslU from Caldicellulosiruptor saccharolyticus (strain ATCC 43494 / DSM 8903 / Tp8T 6331).